The primary structure comprises 552 residues: Steroid transmembrane transporter SLC22A24 (552 aa).

12 helical membrane passes run 16–36, 144–164, 175–197, 201–220, 232–252, 255–275, 349–369, 371–391, 407–427, 435–455, 474–494, and 496–516; these read FQIL…THIL, LKSV…LMFG, IYTW…PTFV, IFRF…AFIL, IGIT…GGLA, IRDW…LSLL, IICF…GLIL, LQDL…ITFI, INQS…TFLS, VVLA…FFVH, VFSR…VYSP, and LPWV…FCLP.

The protein belongs to the major facilitator (TC 2.A.1) superfamily. Organic cation transporter (TC 2.A.1.19) family.

The protein localises to the cell membrane. It catalyses the reaction estrone 3-sulfate(out) + glutarate(in) = estrone 3-sulfate(in) + glutarate(out). The enzyme catalyses 17beta-estradiol 17-O-(beta-D-glucuronate)(out) + glutarate(in) = 17beta-estradiol 17-O-(beta-D-glucuronate)(in) + glutarate(out). It carries out the reaction taurocholate(out) + glutarate(in) = taurocholate(in) + glutarate(out). The catalysed reaction is 5alpha-androstane-3alpha,17beta-diol 3-O-(beta-D-glucuronate)(out) + glutarate(in) = 5alpha-androstane-3alpha,17beta-diol 3-O-(beta-D-glucuronate)(in) + glutarate(out). It catalyses the reaction glycocholate(out) + glutarate(in) = glycocholate(in) + glutarate(out). The enzyme catalyses dehydroepiandrosterone 3-sulfate(out) + glutarate(in) = dehydroepiandrosterone 3-sulfate(in) + glutarate(out). It carries out the reaction glutarate(in) + succinate(out) = glutarate(out) + succinate(in). Its function is as follows. Renal transmembrane organic anion/dicarboxylate exchanger that participates in the reabsorption of conjugated steroids, as well as bile acids, driven by an outward gradient of dicarboxylates such as glutarate or succinate. Transports androstanediol glucuronide (5alpha-androstane-3alpha,17beta-diol 3-O-(beta-D-glucuronate)), estrone 3-sulfate, and estradiol-17-glucuronide (17beta-estradiol 17-O-(beta-D-glucuronate)), and taurocholate. This is Steroid transmembrane transporter SLC22A24 from Oryctolagus cuniculus (Rabbit).